A 603-amino-acid polypeptide reads, in one-letter code: Glutathione-regulated potassium-efflux system protein KefB (603 aa).

A run of 13 helical transmembrane segments spans residues 5–25 (ALLTAGVLFLFVAVVAVPIAA), 29–49 (IGAVLGYLIAGIAIGPWGLGF), 55–75 (AILHFSELGVVFLMFIIGLEL), 87–107 (IFGVGAAQVGLSTLLLGGALY), 115–135 (SALIGGVGLAMSSTAMALQLM), 152–172 (VLLFQDLAVIPALALIPILAG), 180–202 (WERIGLKVAAFLGMLIGGRYLVR), 207–227 (FIAASGVREVFTAAALLLVLG), 230–250 (LFMETLGLSMALGTFIAGILL), 268–288 (GLLLGLFFISVGMALNLGILY), 291–311 (IVKIMVAVLVLVAVKAAVLYF), 326–346 (FAGVLSQGGEFAFVLFSAAAS), and 356–376 (PLLLVTVTLSMMTTPLLMQLI). Residues 400-521 (EPQVIVVGFG…VRHFSRETFS (122 aa)) enclose the RCK N-terminal domain.

The protein belongs to the monovalent cation:proton antiporter 2 (CPA2) transporter (TC 2.A.37) family. KefB subfamily. Interacts with the regulatory subunit KefG.

It localises to the cell inner membrane. In terms of biological role, pore-forming subunit of a potassium efflux system that confers protection against electrophiles. Catalyzes K(+)/H(+) antiport. The sequence is that of Glutathione-regulated potassium-efflux system protein KefB from Pectobacterium carotovorum subsp. carotovorum (strain PC1).